The chain runs to 177 residues: ATP synthase subunit delta (177 aa).

This sequence belongs to the ATPase delta chain family. As to quaternary structure, F-type ATPases have 2 components, F(1) - the catalytic core - and F(0) - the membrane proton channel. F(1) has five subunits: alpha(3), beta(3), gamma(1), delta(1), epsilon(1). F(0) has three main subunits: a(1), b(2) and c(10-14). The alpha and beta chains form an alternating ring which encloses part of the gamma chain. F(1) is attached to F(0) by a central stalk formed by the gamma and epsilon chains, while a peripheral stalk is formed by the delta and b chains.

It is found in the cell inner membrane. Functionally, f(1)F(0) ATP synthase produces ATP from ADP in the presence of a proton or sodium gradient. F-type ATPases consist of two structural domains, F(1) containing the extramembraneous catalytic core and F(0) containing the membrane proton channel, linked together by a central stalk and a peripheral stalk. During catalysis, ATP synthesis in the catalytic domain of F(1) is coupled via a rotary mechanism of the central stalk subunits to proton translocation. Its function is as follows. This protein is part of the stalk that links CF(0) to CF(1). It either transmits conformational changes from CF(0) to CF(1) or is implicated in proton conduction. The sequence is that of ATP synthase subunit delta from Aliivibrio salmonicida (strain LFI1238) (Vibrio salmonicida (strain LFI1238)).